Consider the following 359-residue polypeptide: MEKEKKGARELDLLDIVQFVAPGTPLRAGIENVLRANTGGLIVVGYNDKVKSVVDGGFHINSAFSPAHLYELAKMDGAIILSDSGQKILYANTQLMPDATIHSSETGMRHRTAERVAKQTGCLIIAISERRNVITLYQGNRRYTLKDIGFILTKANQAIQTLEKYKTILDHAISALSALEFEELVTFGDVLSVLHRYEMVLRIKNEINMYIKELGTEGHLIRLQVNELITDMEQEAALFIKDYVKEKIKDPYVLLKQLQDMSSFELLDDSILYKLLGYPASTNIDEYVYTRGYRLLHKIPRLPMPIVENVVEAFGVLDRIMEADVQDLDEVEGIGEVRAKKIKKGLKRLQEKHYIDRQL.

The 139-residue stretch at 10 to 148 (ELDLLDIVQF…GNRRYTLKDI (139 aa)) folds into the DAC domain. ATP contacts are provided by residues Gly-77, Leu-95, and 108–112 (MRHRT).

It belongs to the DisA family. As to quaternary structure, homooctamer. Mg(2+) is required as a cofactor.

The catalysed reaction is 2 ATP = 3',3'-c-di-AMP + 2 diphosphate. Functionally, participates in a DNA-damage check-point that is active prior to asymmetric division when DNA is damaged. DisA forms globular foci that rapidly scan along the chromosomes during sporulation, searching for lesions. When a lesion is present, DisA pauses at the lesion site. This triggers a cellular response that culminates in a temporary block in sporulation initiation. In terms of biological role, also has diadenylate cyclase activity, catalyzing the condensation of 2 ATP molecules into cyclic di-AMP (c-di-AMP). c-di-AMP acts as a signaling molecule that couples DNA integrity with progression of sporulation. The rise in c-di-AMP level generated by DisA while scanning the chromosome, operates as a positive signal that advances sporulation; upon encountering a lesion, the DisA focus arrests at the damaged site and halts c-di-AMP synthesis. The protein is DNA integrity scanning protein DisA of Bacillus pumilus (strain SAFR-032).